A 331-amino-acid polypeptide reads, in one-letter code: Biotin synthase (331 aa).

The 219-residue stretch at 53 to 271 (TELQLSQLLS…IAVARIVCPK (219 aa)) folds into the Radical SAM core domain. Cys68, Cys72, and Cys75 together coordinate [4Fe-4S] cluster. [2Fe-2S] cluster-binding residues include Cys112, Cys143, Cys203, and Arg275.

It belongs to the radical SAM superfamily. Biotin synthase family. As to quaternary structure, homodimer. Requires [4Fe-4S] cluster as cofactor. [2Fe-2S] cluster is required as a cofactor.

It carries out the reaction (4R,5S)-dethiobiotin + (sulfur carrier)-SH + 2 reduced [2Fe-2S]-[ferredoxin] + 2 S-adenosyl-L-methionine = (sulfur carrier)-H + biotin + 2 5'-deoxyadenosine + 2 L-methionine + 2 oxidized [2Fe-2S]-[ferredoxin]. It functions in the pathway cofactor biosynthesis; biotin biosynthesis; biotin from 7,8-diaminononanoate: step 2/2. Functionally, catalyzes the conversion of dethiobiotin (DTB) to biotin by the insertion of a sulfur atom into dethiobiotin via a radical-based mechanism. This Phenylobacterium zucineum (strain HLK1) protein is Biotin synthase.